A 131-amino-acid polypeptide reads, in one-letter code: Hypocretin neuropeptide precursor (131 aa).

A signal peptide spans 1–33 (MNLPSTKVSWAAVTLLLLLLLLPPALLSSGAAA). The residue at position 34 (Q34) is a Pyrrolidone carboxylic acid. Cystine bridges form between C39–C45 and C40–C47. L66 bears the Leucine amide mark. M97 bears the Methionine amide mark. Positions 98–131 (GRRAGAEPAPRPCLGRRCSAPAAASVAPGGQSGI) are cleaved as a propeptide — removed in mature form.

This sequence belongs to the orexin family. In terms of processing, specific enzymatic cleavages at paired basic residues yield the different active peptides. As to expression, abundantly expressed in subthalamic nucleus but undetectable in other brain regions tested (hypothalamus was not tested) and in heart, placenta, lung, liver, skeletal muscle, kidney and pancreas.

The protein resides in the rough endoplasmic reticulum. Its subcellular location is the cytoplasmic vesicle. It localises to the synapse. In terms of biological role, neuropeptides that play a significant role in the regulation of food intake and sleep-wakefulness, possibly by coordinating the complex behavioral and physiologic responses of these complementary homeostatic functions. A broader role in the homeostatic regulation of energy metabolism, autonomic function, hormonal balance and the regulation of body fluids, is also suggested. Its function is as follows. Binds to orexin receptors HCRTR1/OX1R and HCRTR2/OX2R with a high affinity. Stimulates food intake. Modulates pituitary luteinizing hormone secretion in an ovarian steroid-dependent manner. Binds to orexin receptor HCRTR2/OX2R only. Stimulates food intake. Modulates pituitary luteinizing hormone secretion in an ovarian steroid-dependent manner. The polypeptide is Hypocretin neuropeptide precursor (Homo sapiens (Human)).